We begin with the raw amino-acid sequence, 146 residues long: 3-hydroxyacyl-[acyl-carrier-protein] dehydratase FabZ (146 aa).

The active site involves His-49.

Belongs to the thioester dehydratase family. FabZ subfamily.

The protein resides in the cytoplasm. It catalyses the reaction a (3R)-hydroxyacyl-[ACP] = a (2E)-enoyl-[ACP] + H2O. Involved in unsaturated fatty acids biosynthesis. Catalyzes the dehydration of short chain beta-hydroxyacyl-ACPs and long chain saturated and unsaturated beta-hydroxyacyl-ACPs. In Pseudomonas putida (strain ATCC 700007 / DSM 6899 / JCM 31910 / BCRC 17059 / LMG 24140 / F1), this protein is 3-hydroxyacyl-[acyl-carrier-protein] dehydratase FabZ.